A 130-amino-acid polypeptide reads, in one-letter code: RNA silencing suppressor p14 (130 aa).

Acts as a suppressor of RNA-mediated gene silencing, also known as post-transcriptional gene silencing (PTGS), a mechanism of plant viral defense that limits the accumulation of viral RNAs. Binds to dsRNAs without size specificity. The polypeptide is RNA silencing suppressor p14 (Pothos latent virus (isolate Pigeonpea/India) (PoLV)).